The sequence spans 485 residues: Cytosol non-specific dipeptidase (485 aa).

His76 provides a ligand contact to Zn(2+). Residue Asp78 is part of the active site. Asp115 provides a ligand contact to Zn(2+). Glu145 functions as the Proton acceptor in the catalytic mechanism. Zn(2+)-binding residues include Glu146 and Asp169. An N6-acetyllysine modification is found at Lys296. Position 457 (His457) interacts with Zn(2+).

The protein belongs to the peptidase M20C family. Zn(2+) is required as a cofactor. Requires Co(2+) as cofactor.

It carries out the reaction Hydrolysis of dipeptides, preferentially hydrophobic dipeptides including prolyl amino acids.. Its activity is regulated as follows. Inhibited by metal chelators. Dipeptidase with broad substrate specificity. Requires dipeptide substrates with an unblocked N-terminus and the amino group in the alpha or beta position. Non-protein amino acids and proline are not accepted in the C-terminal position, whereas some dipeptide amides and formyl amino acids are hydrolyzed. Also shows cysteinylglycinase activity, which is sufficient for E.coli to utilize cysteinylglycine as a cysteine source. The protein is Cytosol non-specific dipeptidase (pepD) of Escherichia coli (strain K12).